The following is a 326-amino-acid chain: Flap endonuclease 1 (326 aa).

The N-domain stretch occupies residues 1–98 (MGVQFNDSIP…KTREERRKVK (98 aa)). Mg(2+)-binding residues include Asp27, Asp80, Glu152, Glu154, Asp173, Asp175, and Asp224. Residues 116–245 (DMQKYAKRIN…KKALTIIKNK (130 aa)) form an I-domain region. Residues 318–326 (SQTSLDSWF) form an interaction with PCNA region.

This sequence belongs to the XPG/RAD2 endonuclease family. FEN1 subfamily. As to quaternary structure, interacts with PCNA. PCNA stimulates the nuclease activity without altering cleavage specificity. Mg(2+) is required as a cofactor.

Its function is as follows. Structure-specific nuclease with 5'-flap endonuclease and 5'-3' exonuclease activities involved in DNA replication and repair. During DNA replication, cleaves the 5'-overhanging flap structure that is generated by displacement synthesis when DNA polymerase encounters the 5'-end of a downstream Okazaki fragment. Binds the unpaired 3'-DNA end and kinks the DNA to facilitate 5' cleavage specificity. Cleaves one nucleotide into the double-stranded DNA from the junction in flap DNA, leaving a nick for ligation. Also involved in the base excision repair (BER) pathway. Acts as a genome stabilization factor that prevents flaps from equilibrating into structures that lead to duplications and deletions. Also possesses 5'-3' exonuclease activity on nicked or gapped double-stranded DNA. The sequence is that of Flap endonuclease 1 from Methanococcus aeolicus (strain ATCC BAA-1280 / DSM 17508 / OCM 812 / Nankai-3).